A 553-amino-acid chain; its full sequence is Transcriptional regulator HilA (553 aa).

Positions 11–107 form a DNA-binding region, ompR/PhoB-type; the sequence is NKKFVFDDFI…LYGQGYRFNR (97 aa). Position 62 is a 4-aspartylphosphate (Asp62). The stretch at 372–405 is one TPR repeat; the sequence is ADIKYYYGWNLFMAGQLEEALQTINECLKLDPTR.

In terms of biological role, the main transcriptional regulator of the Salmonella pathogenicity island 1 (SPI1) gene expression. Activates the expression of invasion genes by a direct action at their promoters and also indirectly by increasing the level of InvF. Also binds upstream of prgH and directly activates the expression of prgHIJK operon. This is Transcriptional regulator HilA (hilA) from Salmonella typhimurium (strain LT2 / SGSC1412 / ATCC 700720).